The sequence spans 572 residues: Phosphoenolpyruvate-protein phosphotransferase (572 aa).

Residue histidine 191 is the Tele-phosphohistidine intermediate of the active site. Residues arginine 298 and arginine 334 each coordinate phosphoenolpyruvate. Glutamate 433 and aspartate 457 together coordinate Mg(2+). Phosphoenolpyruvate-binding positions include 456 to 457 (ND) and arginine 467. The active-site Proton donor is the cysteine 504.

This sequence belongs to the PEP-utilizing enzyme family. Homodimer. Mg(2+) serves as cofactor.

It is found in the cytoplasm. The enzyme catalyses L-histidyl-[protein] + phosphoenolpyruvate = N(pros)-phospho-L-histidyl-[protein] + pyruvate. Its function is as follows. General (non sugar-specific) component of the phosphoenolpyruvate-dependent sugar phosphotransferase system (sugar PTS). This major carbohydrate active-transport system catalyzes the phosphorylation of incoming sugar substrates concomitantly with their translocation across the cell membrane. Enzyme I transfers the phosphoryl group from phosphoenolpyruvate (PEP) to the phosphoryl carrier protein (HPr). The polypeptide is Phosphoenolpyruvate-protein phosphotransferase (ptsI) (Staphylococcus aureus (strain COL)).